The primary structure comprises 130 residues: Small ribosomal subunit protein uS11 (130 aa).

The protein belongs to the universal ribosomal protein uS11 family. In terms of assembly, part of the 30S ribosomal subunit. Interacts with proteins S7 and S18. Binds to IF-3.

Located on the platform of the 30S subunit, it bridges several disparate RNA helices of the 16S rRNA. Forms part of the Shine-Dalgarno cleft in the 70S ribosome. This Xanthomonas campestris pv. campestris (strain B100) protein is Small ribosomal subunit protein uS11.